Consider the following 189-residue polypeptide: Transcription factor FapR (189 aa).

It belongs to the FapR family.

Transcriptional factor involved in regulation of membrane lipid biosynthesis by repressing genes involved in fatty acid and phospholipid metabolism. This chain is Transcription factor FapR, found in Exiguobacterium sp. (strain ATCC BAA-1283 / AT1b).